The sequence spans 506 residues: Galactose/methyl galactoside import ATP-binding protein MglA (506 aa).

ABC transporter domains follow at residues 14–249 and 264–506; these read LEMK…VGRS and VMLE…SLYL. 46–53 serves as a coordination point for ATP; sequence GENGAGKS.

The protein belongs to the ABC transporter superfamily. Galactose/methyl galactoside importer (TC 3.A.1.2.3) family. As to quaternary structure, the complex is composed of one ATP-binding protein (MglA), two transmembrane proteins (MglC) and a solute-binding protein (MglB).

Its subcellular location is the cell inner membrane. The catalysed reaction is D-galactose(out) + ATP + H2O = D-galactose(in) + ADP + phosphate + H(+). It catalyses the reaction methyl beta-D-galactoside(out) + ATP + H2O = methyl beta-D-galactoside(in) + ADP + phosphate + H(+). Its function is as follows. Part of the ABC transporter complex MglABC involved in galactose/methyl galactoside import. Responsible for energy coupling to the transport system. The chain is Galactose/methyl galactoside import ATP-binding protein MglA from Sodalis glossinidius (strain morsitans).